The following is a 495-amino-acid chain: Probable histidine ammonia-lyase (495 aa).

The 5-imidazolinone (Ala-Gly) cross-link spans 141 to 143; it reads ASG. Position 142 is a 2,3-didehydroalanine (Ser) (Ser-142).

This sequence belongs to the PAL/histidase family. Post-translationally, contains an active site 4-methylidene-imidazol-5-one (MIO), which is formed autocatalytically by cyclization and dehydration of residues Ala-Ser-Gly.

Its subcellular location is the cytoplasm. It catalyses the reaction L-histidine = trans-urocanate + NH4(+). Its pathway is amino-acid degradation; L-histidine degradation into L-glutamate; N-formimidoyl-L-glutamate from L-histidine: step 1/3. The sequence is that of Probable histidine ammonia-lyase from Thermoplasma volcanium (strain ATCC 51530 / DSM 4299 / JCM 9571 / NBRC 15438 / GSS1).